A 378-amino-acid polypeptide reads, in one-letter code: Mitogen-activated protein kinase mpkC (378 aa).

Residues 20–300 (YVNPQPIGMG…AQDALRYPYL (281 aa)) form the Protein kinase domain. ATP-binding positions include 26–34 (IGMGSFGLV) and Lys49. Residue Asp141 is the Proton acceptor of the active site. A Phosphothreonine modification is found at Thr171. The TXY motif lies at 171 to 173 (TGY). Tyr173 is subject to Phosphotyrosine.

Belongs to the protein kinase superfamily. Ser/Thr protein kinase family. MAP kinase subfamily. HOG1 sub-subfamily. Interacts with sakA upon osmotic and cell wall stresses. It depends on Mg(2+) as a cofactor. Dually phosphorylated on Thr-171 and Tyr-173, which activates the enzyme.

The protein resides in the cytoplasm. Its subcellular location is the nucleus. The catalysed reaction is L-seryl-[protein] + ATP = O-phospho-L-seryl-[protein] + ADP + H(+). It catalyses the reaction L-threonyl-[protein] + ATP = O-phospho-L-threonyl-[protein] + ADP + H(+). Activated by tyrosine and threonine phosphorylation. In terms of biological role, mitogen-activated protein kinase; part of an osmotic and general signal pathways involved in regulation of the response to the cell wall damage, oxidative stress, drug resistance, and establishment of infection. Required for growth on media where sorbitol or mannitol is the sole carbon source. With sakA, plays a redundant or cooperative role in the conidial stress resistance. Also plays a supportive role in osmotic stress adaptation when sakA is deficient. Involved in paradoxical growth, the cell wall integrity (CWI) pathway and biofilm formation. Acts by modulating sakA activity upon exposure to several types o stresses and during cell wall biosynthesis. Also collaborates with sakA to allow ful virulence in a neutropenic murine model of invasive pulmonary aspergillosis. MpkC and sakA have both independent and collaborative functions during the transcriptional response to transient osmotic stress, and mpkC plays a major role in the modulation of the response to DNA metabolism while activating mitochondrial functions and cation transport. In Aspergillus fumigatus (strain ATCC MYA-4609 / CBS 101355 / FGSC A1100 / Af293) (Neosartorya fumigata), this protein is Mitogen-activated protein kinase mpkC (mpkC).